We begin with the raw amino-acid sequence, 262 residues long: Acyl-[acyl-carrier-protein]--UDP-N-acetylglucosamine O-acyltransferase (262 aa).

Belongs to the transferase hexapeptide repeat family. LpxA subfamily. As to quaternary structure, homotrimer.

Its subcellular location is the cytoplasm. The catalysed reaction is a (3R)-hydroxyacyl-[ACP] + UDP-N-acetyl-alpha-D-glucosamine = a UDP-3-O-[(3R)-3-hydroxyacyl]-N-acetyl-alpha-D-glucosamine + holo-[ACP]. Its pathway is glycolipid biosynthesis; lipid IV(A) biosynthesis; lipid IV(A) from (3R)-3-hydroxytetradecanoyl-[acyl-carrier-protein] and UDP-N-acetyl-alpha-D-glucosamine: step 1/6. In terms of biological role, involved in the biosynthesis of lipid A, a phosphorylated glycolipid that anchors the lipopolysaccharide to the outer membrane of the cell. The chain is Acyl-[acyl-carrier-protein]--UDP-N-acetylglucosamine O-acyltransferase from Histophilus somni (strain 129Pt) (Haemophilus somnus).